Consider the following 161-residue polypeptide: Ribosomal RNA large subunit methyltransferase H (161 aa).

Residues L78, G110, and 129–134 (LSRLTF) each bind S-adenosyl-L-methionine.

This sequence belongs to the RNA methyltransferase RlmH family. Homodimer.

The protein localises to the cytoplasm. It catalyses the reaction pseudouridine(1915) in 23S rRNA + S-adenosyl-L-methionine = N(3)-methylpseudouridine(1915) in 23S rRNA + S-adenosyl-L-homocysteine + H(+). Its function is as follows. Specifically methylates the pseudouridine at position 1915 (m3Psi1915) in 23S rRNA. The polypeptide is Ribosomal RNA large subunit methyltransferase H (Heliobacterium modesticaldum (strain ATCC 51547 / Ice1)).